A 217-amino-acid polypeptide reads, in one-letter code: UDP-N-acetylglucosamine transferase subunit ALG14 (217 aa).

Over 1–3 (MLS) the chain is Lumenal. Residues 4-26 (ILILAATAAGLVILLFQRLWTVL) traverse the membrane as a helical segment. Over 27–217 (GPHHVTPRES…PKSVYLGRIV (191 aa)) the chain is Cytoplasmic.

The protein belongs to the ALG14 family. As to quaternary structure, forms with ALG13 the active heterodimeric UDP-N-acetylglucosamine transferase complex.

It localises to the endoplasmic reticulum membrane. Functionally, part of the UDP-N-acetylglucosamine transferase complex that operates in the biosynthetic pathway of dolichol-linked oligosaccharides, the glycan precursors employed in protein asparagine (N)-glycosylation. The assembly of dolichol-linked oligosaccharides begins on the cytosolic side of the endoplasmic reticulum membrane and finishes in its lumen. The sequential addition of sugars to dolichol pyrophosphate produces dolichol-linked oligosaccharides containing fourteen sugars, including two GlcNAcs, nine mannoses and three glucoses. Once assembled, the oligosaccharides are transferred from the lipid to nascent proteins by oligosaccharyltransferases. Functions as a protein-membrane adapter recruiting ALG13 at the cytoplasmic face of the endoplasmic reticulum, where the complex catalyzes the second step of dolichol pyrophosphate biosynthesis, transferring a beta1,4-linked N-acetylglucosamine (GlcNAc) from UDP-GlcNAc to GlcNAc-pyrophosphatedolichol (Gn-PDol) to produce N,N'-diacetylchitobiosyl diphosphodolichol. N,N'-diacetylchitobiosyl diphosphodolichol is a substrate for ALG1, the following enzyme in the biosynthetic pathway. The polypeptide is UDP-N-acetylglucosamine transferase subunit ALG14 (Mus musculus (Mouse)).